The following is a 193-amino-acid chain: Potassium-transporting ATPase KdpC subunit (193 aa).

Residues 14–34 (ITFTFLVLCGLVYPLIVTGIA) form a helical membrane-spanning segment.

This sequence belongs to the KdpC family. The system is composed of three essential subunits: KdpA, KdpB and KdpC.

It is found in the cell membrane. Its function is as follows. Part of the high-affinity ATP-driven potassium transport (or Kdp) system, which catalyzes the hydrolysis of ATP coupled with the electrogenic transport of potassium into the cytoplasm. This subunit acts as a catalytic chaperone that increases the ATP-binding affinity of the ATP-hydrolyzing subunit KdpB by the formation of a transient KdpB/KdpC/ATP ternary complex. The chain is Potassium-transporting ATPase KdpC subunit from Bacillus cereus (strain ATCC 10987 / NRS 248).